We begin with the raw amino-acid sequence, 113 residues long: Cell cycle protein GpsB (113 aa).

Residues Lys-37–Lys-63 adopt a coiled-coil conformation. Positions Thr-61–Ala-82 are disordered.

The protein belongs to the GpsB family. As to quaternary structure, forms polymers through the coiled coil domains. Interacts with PBP1, MreC and EzrA.

The protein resides in the cytoplasm. Functionally, divisome component that associates with the complex late in its assembly, after the Z-ring is formed, and is dependent on DivIC and PBP2B for its recruitment to the divisome. Together with EzrA, is a key component of the system that regulates PBP1 localization during cell cycle progression. Its main role could be the removal of PBP1 from the cell pole after pole maturation is completed. Also contributes to the recruitment of PBP1 to the division complex. Not essential for septum formation. This is Cell cycle protein GpsB from Streptococcus pneumoniae (strain ATCC 700669 / Spain 23F-1).